A 78-amino-acid chain; its full sequence is Pigment-dispersing hormone 1 peptides (78 aa).

An N-terminal signal peptide occupies residues 1 to 22; it reads MRSSVIVAVLVVVALAALLTQG. Ala-75 is subject to Alanine amide.

Belongs to the arthropod PDH family. As to expression, eyestalk sinus gland.

The protein localises to the secreted. The pigment-dispersing hormone causes the migration of the distal retinal pigment into the proximal end of the pigment chromatophore cells and thus decreases the amount of light entering the retinulas. May also function as a neurotransmitter and/or neuromodulator. The polypeptide is Pigment-dispersing hormone 1 peptides (PDH1) (Callinectes sapidus (Blue crab)).